The primary structure comprises 392 residues: 6-aminohexanoate-dimer hydrolase (392 aa).

The disordered stretch occupies residues 1–27; it reads MNTPTTGSHPARYPSAAAGEPTLDSWQ. Ser-112 is an active-site residue.

It catalyses the reaction [N-(6-aminohexanoyl)](n) + H2O = [N-(6-aminohexanoyl)](n-1) + 6-aminohexanoate. The enzyme catalyses N-(6-aminohexanoyl)-6-aminohexanoate + H2O = 2 6-aminohexanoate. It functions in the pathway xenobiotic degradation; nylon-6 oligomer degradation. Its function is as follows. Involved in nylon oligomer degradation. In Paenarthrobacter ureafaciens, this protein is 6-aminohexanoate-dimer hydrolase.